Here is a 207-residue protein sequence, read N- to C-terminus: Outer-membrane lipoprotein carrier protein (207 aa).

The N-terminal stretch at 1–23 is a signal peptide; the sequence is MMKPHNLFQFLAVCSLTVAVASA.

This sequence belongs to the LolA family. In terms of assembly, monomer.

Its subcellular location is the periplasm. Participates in the translocation of lipoproteins from the inner membrane to the outer membrane. Only forms a complex with a lipoprotein if the residue after the N-terminal Cys is not an aspartate (The Asp acts as a targeting signal to indicate that the lipoprotein should stay in the inner membrane). The sequence is that of Outer-membrane lipoprotein carrier protein from Neisseria gonorrhoeae (strain ATCC 700825 / FA 1090).